We begin with the raw amino-acid sequence, 211 residues long: Claudin-13 (211 aa).

The Cytoplasmic segment spans residues 1–8; the sequence is MVVSKQEA. Residues 9–29 form a helical membrane-spanning segment; the sequence is ISFSVTSLGWVGAIVSCVLPV. The Extracellular portion of the chain corresponds to 30-80; sequence WRVTFPDDETDPDATIWEGLWHICQVRENRWIQCTLYDTRILVAQDIKVSR. Residues 81–101 traverse the membrane as a helical segment; sequence VFMVICTIGTWLGLLLCVLGD. Topologically, residues 102–118 are cytoplasmic; that stretch reads WRINCFMNFTIEENLLK. The helical transmembrane segment at 119-139 threads the bilayer; sequence VAGGMFLSVGLLMLVPLSWVT. Residues 140–165 lie on the Extracellular side of the membrane; sequence HNIIHGFFNPLLGFSKKVQMGSSLSL. Residues 166–186 form a helical membrane-spanning segment; sequence AWTSSLLLLLGGILLCVNIPV. Residues 187 to 211 are Cytoplasmic-facing; the sequence is CRDFPRCIETPSARPSGANNDTLDV.

The protein belongs to the claudin family.

It is found in the cell junction. The protein localises to the tight junction. Its subcellular location is the cell membrane. Its function is as follows. Plays a major role in tight junction-specific obliteration of the intercellular space, through calcium-independent cell-adhesion activity. The polypeptide is Claudin-13 (Cldn13) (Mus musculus (Mouse)).